Here is a 288-residue protein sequence, read N- to C-terminus: Protein FANTASTIC FOUR 3 (288 aa).

The span at 48–60 (HAEDTRNRNDDKA) shows a compositional bias: basic and acidic residues. Disordered regions lie at residues 48–100 (HAED…YYVQ), 146–172 (ETTT…PLTT), and 222–261 (NEFV…IENV). The segment covering 66–90 (SDSSGWSSLQSLSSGSSSSTKTTTS) has biased composition (low complexity). The 53-residue stretch at 165-217 (DLPPPLTTMRGFQCIQMRPHRENGRLVMTATNAPPRNGCFQADRSNGRLRLSI) folds into the FAF domain. Residues 223–256 (EFVENEEETIEPEETEEYEEEEEEEEDEDEDEVM) are compositionally biased toward acidic residues.

The protein belongs to the fantastic four family. In terms of tissue distribution, expressed in the shoot apex, stamens, young leaves and young siliques, but not in old leaves. Detected in provascular and vascular tissue, but not in the vegetative meristem. In inflorescences, restricted to the vasculature and absent from young flowers, except from anthers.

Functionally, able to repress WUS when constitutively overexpressed, but have no effect on CLV3. This Arabidopsis thaliana (Mouse-ear cress) protein is Protein FANTASTIC FOUR 3 (FAF3).